The sequence spans 201 residues: 3-isopropylmalate dehydratase small subunit (201 aa).

The protein belongs to the LeuD family. LeuD type 1 subfamily. Heterodimer of LeuC and LeuD.

The catalysed reaction is (2R,3S)-3-isopropylmalate = (2S)-2-isopropylmalate. Its pathway is amino-acid biosynthesis; L-leucine biosynthesis; L-leucine from 3-methyl-2-oxobutanoate: step 2/4. In terms of biological role, catalyzes the isomerization between 2-isopropylmalate and 3-isopropylmalate, via the formation of 2-isopropylmaleate. The chain is 3-isopropylmalate dehydratase small subunit from Shewanella pealeana (strain ATCC 700345 / ANG-SQ1).